The chain runs to 94 residues: Co-chaperonin GroES (94 aa).

This sequence belongs to the GroES chaperonin family. As to quaternary structure, heptamer of 7 subunits arranged in a ring. Interacts with the chaperonin GroEL.

The protein resides in the cytoplasm. Its function is as follows. Together with the chaperonin GroEL, plays an essential role in assisting protein folding. The GroEL-GroES system forms a nano-cage that allows encapsulation of the non-native substrate proteins and provides a physical environment optimized to promote and accelerate protein folding. GroES binds to the apical surface of the GroEL ring, thereby capping the opening of the GroEL channel. The polypeptide is Co-chaperonin GroES (Parageobacillus thermoglucosidasius (Geobacillus thermoglucosidasius)).